The primary structure comprises 935 residues: Disintegrin and metalloproteinase domain-containing protein 22 (935 aa).

Residues methionine 1–alanine 24 form the signal peptide. A propeptide spanning residues serine 25 to arginine 227 is cleaved from the precursor. 2 N-linked (GlcNAc...) asparagine glycosylation sites follow: asparagine 167 and asparagine 210. At glutamine 228–asparagine 736 the chain is on the extracellular side. In terms of domain architecture, Peptidase M12B spans lysine 241–proline 440. 17 cysteine pairs are disulfide-bonded: cysteine 351–cysteine 435, cysteine 394–cysteine 419, cysteine 396–cysteine 403, cysteine 449–cysteine 479, cysteine 460–cysteine 476, cysteine 462–cysteine 468, cysteine 475–cysteine 496, cysteine 487–cysteine 493, cysteine 492–cysteine 518, cysteine 505–cysteine 525, cysteine 512–cysteine 544, cysteine 537–cysteine 549, cysteine 556–cysteine 607, cysteine 571–cysteine 637, cysteine 585–cysteine 595, cysteine 602–cysteine 665, and cysteine 659–cysteine 670. The 88-residue stretch at proline 446–aspartate 533 folds into the Disintegrin domain. Asparagine 521 carries N-linked (GlcNAc...) asparagine glycosylation. 2 N-linked (GlcNAc...) asparagine glycosylation sites follow: asparagine 609 and asparagine 636. N-linked (GlcNAc...) asparagine glycosylation occurs at asparagine 677. One can recognise an EGF-like domain in the interval asparagine 677–serine 713. 3 disulfide bridges follow: cysteine 681/cysteine 695, cysteine 689/cysteine 701, and cysteine 703/cysteine 712. A helical membrane pass occupies residues isoleucine 737 to alanine 757. The Cytoplasmic segment spans residues tryptophan 758–isoleucine 935. A disordered region spans residues valine 850–isoleucine 935. Positions proline 859 to serine 870 are enriched in polar residues. Residues serine 871–proline 882 show a composition bias toward basic residues. The segment covering serine 891–serine 906 has biased composition (low complexity).

Post-translationally, the precursor is cleaved by a furin endopeptidase. In terms of tissue distribution, low levels in adult tissues. Not detected in developing embryos.

The protein localises to the cell membrane. Functionally, probable ligand for integrin in the brain. This is a non catalytic metalloprotease-like protein. This Xenopus laevis (African clawed frog) protein is Disintegrin and metalloproteinase domain-containing protein 22 (adam22).